Consider the following 507-residue polypeptide: Histidine ammonia-lyase (507 aa).

Positions 141–143 (ASG) form a cross-link, 5-imidazolinone (Ala-Gly). Ser-142 is modified (2,3-didehydroalanine (Ser)).

It belongs to the PAL/histidase family. Contains an active site 4-methylidene-imidazol-5-one (MIO), which is formed autocatalytically by cyclization and dehydration of residues Ala-Ser-Gly.

Its subcellular location is the cytoplasm. It catalyses the reaction L-histidine = trans-urocanate + NH4(+). The protein operates within amino-acid degradation; L-histidine degradation into L-glutamate; N-formimidoyl-L-glutamate from L-histidine: step 1/3. The polypeptide is Histidine ammonia-lyase (Burkholderia cenocepacia (strain HI2424)).